A 126-amino-acid chain; its full sequence is Holo-[acyl-carrier-protein] synthase (126 aa).

Residues Asp9 and Glu58 each contribute to the Mg(2+) site.

It belongs to the P-Pant transferase superfamily. AcpS family. It depends on Mg(2+) as a cofactor.

The protein localises to the cytoplasm. It carries out the reaction apo-[ACP] + CoA = holo-[ACP] + adenosine 3',5'-bisphosphate + H(+). In terms of biological role, transfers the 4'-phosphopantetheine moiety from coenzyme A to a Ser of acyl-carrier-protein. The sequence is that of Holo-[acyl-carrier-protein] synthase from Pectobacterium atrosepticum (strain SCRI 1043 / ATCC BAA-672) (Erwinia carotovora subsp. atroseptica).